The primary structure comprises 569 residues: Dihydroxy-acid dehydratase (569 aa).

Position 61 (Cys61) interacts with [2Fe-2S] cluster. Residue Asp93 participates in Mg(2+) binding. Cys134 is a [2Fe-2S] cluster binding site. Residues Asp135 and Lys136 each coordinate Mg(2+). N6-carboxylysine is present on Lys136. Cys211 provides a ligand contact to [2Fe-2S] cluster. Glu462 contributes to the Mg(2+) binding site. Ser488 acts as the Proton acceptor in catalysis.

The protein belongs to the IlvD/Edd family. In terms of assembly, homodimer. [2Fe-2S] cluster is required as a cofactor. Mg(2+) serves as cofactor.

The enzyme catalyses (2R)-2,3-dihydroxy-3-methylbutanoate = 3-methyl-2-oxobutanoate + H2O. It carries out the reaction (2R,3R)-2,3-dihydroxy-3-methylpentanoate = (S)-3-methyl-2-oxopentanoate + H2O. Its pathway is amino-acid biosynthesis; L-isoleucine biosynthesis; L-isoleucine from 2-oxobutanoate: step 3/4. It participates in amino-acid biosynthesis; L-valine biosynthesis; L-valine from pyruvate: step 3/4. Functionally, functions in the biosynthesis of branched-chain amino acids. Catalyzes the dehydration of (2R,3R)-2,3-dihydroxy-3-methylpentanoate (2,3-dihydroxy-3-methylvalerate) into 2-oxo-3-methylpentanoate (2-oxo-3-methylvalerate) and of (2R)-2,3-dihydroxy-3-methylbutanoate (2,3-dihydroxyisovalerate) into 2-oxo-3-methylbutanoate (2-oxoisovalerate), the penultimate precursor to L-isoleucine and L-valine, respectively. The chain is Dihydroxy-acid dehydratase from Tropheryma whipplei (strain TW08/27) (Whipple's bacillus).